A 644-amino-acid polypeptide reads, in one-letter code: Ribonuclease R (644 aa).

Residues 211–529 (RINYSHIPFI…LHRLLKELLF (319 aa)) enclose the RNB domain. The 72-residue stretch at 573–644 (LEFLEKEFLG…ITERIKEHVS (72 aa)) folds into the S1 motif domain.

It belongs to the RNR ribonuclease family. RNase R subfamily.

It is found in the cytoplasm. It catalyses the reaction Exonucleolytic cleavage in the 3'- to 5'-direction to yield nucleoside 5'-phosphates.. Functionally, 3'-5' exoribonuclease that releases 5'-nucleoside monophosphates and is involved in maturation of structured RNAs. The polypeptide is Ribonuclease R (Helicobacter pylori (strain J99 / ATCC 700824) (Campylobacter pylori J99)).